A 356-amino-acid polypeptide reads, in one-letter code: DNA polymerase IV (356 aa).

The region spanning 6–187 is the UmuC domain; that stretch reads IIHIDMDAFY…QPIRRLHGVG (182 aa). Mg(2+) is bound by residues aspartate 10 and aspartate 105. Residue glutamate 106 is part of the active site.

It belongs to the DNA polymerase type-Y family. Monomer. Mg(2+) serves as cofactor.

It localises to the cytoplasm. It catalyses the reaction DNA(n) + a 2'-deoxyribonucleoside 5'-triphosphate = DNA(n+1) + diphosphate. In terms of biological role, poorly processive, error-prone DNA polymerase involved in untargeted mutagenesis. Copies undamaged DNA at stalled replication forks, which arise in vivo from mismatched or misaligned primer ends. These misaligned primers can be extended by PolIV. Exhibits no 3'-5' exonuclease (proofreading) activity. May be involved in translesional synthesis, in conjunction with the beta clamp from PolIII. This Halorhodospira halophila (strain DSM 244 / SL1) (Ectothiorhodospira halophila (strain DSM 244 / SL1)) protein is DNA polymerase IV.